Reading from the N-terminus, the 173-residue chain is Flavodoxin (173 aa).

The 167-residue stretch at 2 to 168 (IGIFFSTSTG…RVAGWVEAVV (167 aa)) folds into the Flavodoxin-like domain.

Belongs to the flavodoxin family. It depends on FMN as a cofactor.

Functionally, low-potential electron donor to a number of redox enzymes. This chain is Flavodoxin, found in Chondrus crispus (Carrageen Irish moss).